Consider the following 185-residue polypeptide: FK506-binding protein 2 (185 aa).

The signal sequence occupies residues 1-20 (MQGLLLSLSLLASAAVGVLA). The 89-residue stretch at 41-129 (GDKINVHYKG…VFETELVGIE (89 aa)) folds into the PPIase FKBP-type domain. The Prevents secretion from ER motif lies at 182–185 (HNEL).

This sequence belongs to the FKBP-type PPIase family. FKBP2 subfamily.

The protein resides in the endoplasmic reticulum. The enzyme catalyses [protein]-peptidylproline (omega=180) = [protein]-peptidylproline (omega=0). Inhibited by both FK506 and rapamycin. Functionally, PPIases accelerate the folding of proteins. It catalyzes the cis-trans isomerization of proline imidic peptide bonds in oligopeptides. The sequence is that of FK506-binding protein 2 (FPR2) from Podospora anserina (Pleurage anserina).